The following is a 1180-amino-acid chain: IQ domain-containing protein N (1180 aa).

The tract at residues 34 to 78 (HPPAPAHPSLLDKMEKAPPQPQHEGLKSKEHLPQQPAEGKTASRR) is disordered. One can recognise an IQ 1 domain in the interval 103–132 (HARAATLIQANWRGYWLRQKLISQMMAAKA). Disordered regions lie at residues 283-324 (RVSA…ETPK), 476-496 (MSKTSSQRSPVGVTKPSPQTR), and 786-820 (QRLGGLSAPPWAKPEDRQTQPQPHGHVPGKTTQGG). IQ domains follow at residues 926–955 (RILAVITIQAGVRGYLARRRIRLWHRGAMV), 956–978 (IQATWRGYRVRRNLAHLCRATTT), 979–1001 (IQSAWRGYSTRRDQARHWQMLHP), 1113–1142 (QDKAATAIQSAWRGFKIRQQMRQQQMAAKI), and 1143–1165 (VQATWRGHHTRSCLKNTEALLGP).

Interacts with calmodulin.

Its function is as follows. Essential for spermiogenesis and fertilization. May be required for manchette assembly in elongating spermatids. This is IQ domain-containing protein N from Homo sapiens (Human).